The chain runs to 508 residues: Lysine--tRNA ligase (508 aa).

E418 and E425 together coordinate Mg(2+).

The protein belongs to the class-II aminoacyl-tRNA synthetase family. As to quaternary structure, homodimer. It depends on Mg(2+) as a cofactor.

Its subcellular location is the cytoplasm. It catalyses the reaction tRNA(Lys) + L-lysine + ATP = L-lysyl-tRNA(Lys) + AMP + diphosphate. This chain is Lysine--tRNA ligase, found in Burkholderia thailandensis (strain ATCC 700388 / DSM 13276 / CCUG 48851 / CIP 106301 / E264).